Reading from the N-terminus, the 37-residue chain is Large ribosomal subunit protein bL36c (37 aa).

It belongs to the bacterial ribosomal protein bL36 family.

It is found in the plastid. The protein localises to the chloroplast. The protein is Large ribosomal subunit protein bL36c of Liriodendron tulipifera (Tuliptree).